We begin with the raw amino-acid sequence, 117 residues long: Reprimo-like protein (117 aa).

A helical transmembrane segment spans residues 64–84; it reads VAQIAVLCVLSLTVVFGVFFL. A Phosphoserine modification is found at serine 106.

This sequence belongs to the reprimo family.

It localises to the membrane. In Mus musculus (Mouse), this protein is Reprimo-like protein (Rprml).